Reading from the N-terminus, the 433-residue chain is Enolase (433 aa).

Q167 serves as a coordination point for (2R)-2-phosphoglycerate. E209 acts as the Proton donor in catalysis. D246 provides a ligand contact to Mg(2+). The short motif at 252–260 is the Plasminogen-binding motif element; the sequence is FYDAEKKEY. Mg(2+) is bound by residues E291 and D318. K343, R372, S373, and K394 together coordinate (2R)-2-phosphoglycerate. The active-site Proton acceptor is K343.

Belongs to the enolase family. Component of the RNA degradosome, a multiprotein complex involved in RNA processing and mRNA degradation. Requires Mg(2+) as cofactor.

The protein localises to the cell inner membrane. The protein resides in the cell outer membrane. Its subcellular location is the cytoplasm. It is found in the secreted. It localises to the cell surface. It catalyses the reaction (2R)-2-phosphoglycerate = phosphoenolpyruvate + H2O. It functions in the pathway carbohydrate degradation; glycolysis; pyruvate from D-glyceraldehyde 3-phosphate: step 4/5. Functionally, catalyzes the reversible conversion of 2-phosphoglycerate (2-PG) into phosphoenolpyruvate (PEP). It is essential for the degradation of carbohydrates via glycolysis. Its function is as follows. 'Moonlights' as a plasminogen receptor and plasmin activator. Binds host (human) plasminogen in vitro. Binds human plasmin and plasminogen on the cell surface; enhances the activity of host tissue-specific plasminogen activator (tPA). Plasmin bound to bacteria is partially protected from its physiological inhibitor alpha-2AP (SERPINF2). In Aeromonas hydrophila, this protein is Enolase.